The following is a 286-amino-acid chain: MAAPGPGAGAASGGASGGGAGAGGGASAGSGSSGVGGRLPSRVLELVFSYLELSELRSCALVCKHWYRCLHGDENSEVWRSLCARSLAEEALRTDILCNLPSYKAKVRAFQHAFSTNDCSRNVYIKKNGFTLHRNPIAQSTDGARTKIGFSEGRHAWEVWWEGPLGTVAVIGIATKRAPMQCQGYVALLGSDDQSWGWNLVDNNLLHNGEVNGSFPQCNNAPKYQIGERIRVILDMEDKTLAFERGYEFLGVAFRGLPKACLYPAVSAVYGNTEVTLVYLGKPLDG.

N-acetylalanine is present on Ala-2. An F-box domain is found at 33–82; the sequence is SGVGGRLPSRVLELVFSYLELSELRSCALVCKHWYRCLHGDENSEVWRSL. The B30.2/SPRY domain maps to 92 to 284; the sequence is LRTDILCNLP…VTLVYLGKPL (193 aa).

It belongs to the FBXO45/Fsn family. In terms of assembly, forms a complex with MYCBP2 and SKP1. Interacts with HEY1; leading to FBXO45 nuclear translocation. Interacts (via SPRY domain) with CDH2. As to expression, expressed speciffically in the central nervous system, including cerebellum, medulla oblongata, olfactory bulb, hippocampus, cortex and brain stem.

It is found in the secreted. The protein resides in the postsynaptic cell membrane. Its subcellular location is the presynaptic cell membrane. It localises to the nucleus. It participates in protein modification; protein ubiquitination. Its function is as follows. Component of E3 ubiquitin ligase complex consisting of FBXO45, MYCBP2 and SKP1. Functions in substrate recognition but plays also an important role in assembly of the complex. Required for normal neuromuscular synaptogenesis, axon pathfinding and neuronal migration. Regulates neuron migration during brain development through interaction with N-cadherin/CDH2 after secretion via a non-classical mechanism. Plays a role in the regulation of neurotransmission at mature neurons. May control synaptic activity by controlling UNC13A via ubiquitin dependent pathway. Specifically recognizes TP73, promoting its ubiquitination and degradation. Polyubiquitinates NMNAT2, an adenylyltransferase that acts as an axon maintenance factor, and regulates its stability and degradation by the proteasome. Acts also by ubiquitinating FBXW7 during prolonged mitotic arrest and promotes FBXW7 proteasomal degradation. Induces subsequently an increase in mitotic slippage and prevents mitotic cell death. In response to influenza infection, mediates interferon-lambda receptor IFNLR1 polyubiquitination and degradation through the ubiquitin-proteasome system by docking with its intracellular receptor domain. The chain is F-box/SPRY domain-containing protein 1 from Mus musculus (Mouse).